A 63-amino-acid chain; its full sequence is ATP synthase F(0) complex subunit 8 (63 aa).

The helical transmembrane segment at 8-24 threads the bilayer; that stretch reads TWLLTILSMLLTLFVLF. N6-acetyllysine is present on lysine 57.

Belongs to the ATPase protein 8 family. As to quaternary structure, component of the ATP synthase complex composed at least of ATP5F1A/subunit alpha, ATP5F1B/subunit beta, ATP5MC1/subunit c (homooctomer), MT-ATP6/subunit a, MT-ATP8/subunit 8, ATP5ME/subunit e, ATP5MF/subunit f, ATP5MG/subunit g, ATP5MK/subunit k, ATP5MJ/subunit j, ATP5F1C/subunit gamma, ATP5F1D/subunit delta, ATP5F1E/subunit epsilon, ATP5PF/subunit F6, ATP5PB/subunit b, ATP5PD/subunit d, ATP5PO/subunit OSCP. ATP synthase complex consists of a soluble F(1) head domain (subunits alpha(3) and beta(3)) - the catalytic core - and a membrane F(0) domain - the membrane proton channel (subunits c, a, 8, e, f, g, k and j). These two domains are linked by a central stalk (subunits gamma, delta, and epsilon) rotating inside the F1 region and a stationary peripheral stalk (subunits F6, b, d, and OSCP). Interacts with PRICKLE3.

It is found in the mitochondrion membrane. In terms of biological role, subunit 8, of the mitochondrial membrane ATP synthase complex (F(1)F(0) ATP synthase or Complex V) that produces ATP from ADP in the presence of a proton gradient across the membrane which is generated by electron transport complexes of the respiratory chain. ATP synthase complex consist of a soluble F(1) head domain - the catalytic core - and a membrane F(1) domain - the membrane proton channel. These two domains are linked by a central stalk rotating inside the F(1) region and a stationary peripheral stalk. During catalysis, ATP synthesis in the catalytic domain of F(1) is coupled via a rotary mechanism of the central stalk subunits to proton translocation. In vivo, can only synthesize ATP although its ATP hydrolase activity can be activated artificially in vitro. Part of the complex F(0) domain. The protein is ATP synthase F(0) complex subunit 8 of Balaenoptera musculus (Blue whale).